Consider the following 519-residue polypeptide: Apolipoprotein N-acyltransferase (519 aa).

Transmembrane regions (helical) follow at residues 6–26, 47–67, 83–103, 126–146, 174–194, and 206–226; these read APLGWTYVAWFGQIPLWIWIF, LTAIAWGGGFYGVALFWITGV, IAAFCWLAITAWGVVLVFVWL, LFILWGTASWCGLETLWSHSI, LLSAFIVAVNGFLALGLIDFL, and WHYFLIAILIWLFCQGGGWLL. A CN hydrolase domain is found at 244 to 482; the sequence is IQGNIPNQIK…YEIHAAPIYR (239 aa). The active-site Proton acceptor is the glutamate 285. The active site involves lysine 343. Cysteine 394 serves as the catalytic Nucleophile. The chain crosses the membrane as a helical span at residues 496 to 516; sequence VVFLLLVVSAIAWLYQIVFPL.

The protein belongs to the CN hydrolase family. Apolipoprotein N-acyltransferase subfamily.

It localises to the cell inner membrane. The catalysed reaction is N-terminal S-1,2-diacyl-sn-glyceryl-L-cysteinyl-[lipoprotein] + a glycerophospholipid = N-acyl-S-1,2-diacyl-sn-glyceryl-L-cysteinyl-[lipoprotein] + a 2-acyl-sn-glycero-3-phospholipid + H(+). It functions in the pathway protein modification; lipoprotein biosynthesis (N-acyl transfer). Functionally, catalyzes the phospholipid dependent N-acylation of the N-terminal cysteine of apolipoprotein, the last step in lipoprotein maturation. The polypeptide is Apolipoprotein N-acyltransferase (Synechocystis sp. (strain ATCC 27184 / PCC 6803 / Kazusa)).